A 144-amino-acid polypeptide reads, in one-letter code: Dynein light chain Tctex-type protein 2B (144 aa).

The protein belongs to the dynein light chain Tctex-type family. Light chain of the cytoplasmic dynein complex 2, a multisubunit complex composed at least of eleven different proteins. The cytoplasmic dynein 2 complex consists of two catalytic heavy chains (HCs) and a number of non-catalytic subunits presented by intermediate chains (ICs), light intermediate chains (LICs) and light chains (LCs). Among them, a heavy chain (DYNC2H1), two intermediate chains (DYNC2I2 and DYNC2I1), a light intermediate chain (DYNC2LI1), and a light chain (DYNLT2B) are unique to the dynein-2 complex, but a subset of the light chains are also shared by dynein-1 and dynein-2 complexes. The dimer DYNLT2B-DYNLT1/DYNLT3 interacts with DYNC2I1; this interaction is crucial for retrograde trafficking of ciliary proteins.

The protein localises to the dynein axonemal particle. Functionally, acts as one of several non-catalytic accessory components of the cytoplasmic dynein 2 complex (dynein-2 complex), a motor protein complex that drives the movement of cargos along microtubules within cilia and flagella in concert with the intraflagellar transport (IFT) system. Required for proper retrograde ciliary transport. The chain is Dynein light chain Tctex-type protein 2B (Dynlt2b) from Mus musculus (Mouse).